Reading from the N-terminus, the 598-residue chain is Transcription factor dpl-1 (598 aa).

Disordered stretches follow at residues 1–73, 435–457, and 573–598; these read MNPT…PTGL, NRPY…VNSG, and TEQP…DYFQ. Residues 13–22 show a composition bias toward polar residues; it reads PAQSRPQVSL. Residues 55–64 are compositionally biased toward gly residues; that stretch reads GVGGSSGAGG.

Belongs to the E2F/DP family. Component of the DRM complex, at least composed of lin-9, lin-35, lin-37, lin-52, lin-53, lin-54- dpl-1 and efl-1. Interacts (via N-terminus) with efl-1. Interacts (via C-terminus) with lin-35 (via C-terminus).

Its subcellular location is the nucleus. Synthetic multivulva class B (synMuvB) protein. SynMuvB proteins are required to repress the induction of vulval development by Ras signaling and probably act by forming the multiprotein DRM complex that represses transcription. May also negatively regulate vulval development in association with other SynMuv class B proteins such as lin-15A. Can stimulate E2F-dependent transcription. Plays a role in negatively regulating the progression through the G1 phase of the cell cycle during postembryonic development, most likely by acting as a transcriptional repressor in association with the cell cycle regulatory factor efl-1 and the transcriptional repressor lin-35, but may also act as a positive regulator of cell cycle entry. Involved in the regulation of intestinal cell division during postembryonic development, most likely in complex with efl-1 and lin-35. Promotes germ cell programmed cell death, probably together with efl-1, by positively regulating the expression of the apoptosis proteins ced-3 and ced-4. In particular, positively regulates the expression of ced-4 in response to starvation. Its role in programmed cell death may be in conjunction with cell cycle regulatory factor efl-1 and the synthetic multivulva class B proteins lin-35, lin-37 and lin-52, and is independent of the ced-1, ced-8 and ced-9 pathways. This chain is Transcription factor dpl-1, found in Caenorhabditis elegans.